The chain runs to 223 residues: Probable transaldolase (223 aa).

The Schiff-base intermediate with substrate role is filled by K92.

The protein belongs to the transaldolase family. Type 3B subfamily.

The protein resides in the cytoplasm. The enzyme catalyses D-sedoheptulose 7-phosphate + D-glyceraldehyde 3-phosphate = D-erythrose 4-phosphate + beta-D-fructose 6-phosphate. Its pathway is carbohydrate degradation; pentose phosphate pathway; D-glyceraldehyde 3-phosphate and beta-D-fructose 6-phosphate from D-ribose 5-phosphate and D-xylulose 5-phosphate (non-oxidative stage): step 2/3. In terms of biological role, transaldolase is important for the balance of metabolites in the pentose-phosphate pathway. The polypeptide is Probable transaldolase (Thermus thermophilus (strain ATCC 27634 / DSM 579 / HB8)).